Here is a 353-residue protein sequence, read N- to C-terminus: UDP-3-O-acylglucosamine N-acyltransferase (353 aa).

The active-site Proton acceptor is the His242.

Belongs to the transferase hexapeptide repeat family. LpxD subfamily. Homotrimer.

The catalysed reaction is a UDP-3-O-[(3R)-3-hydroxyacyl]-alpha-D-glucosamine + a (3R)-hydroxyacyl-[ACP] = a UDP-2-N,3-O-bis[(3R)-3-hydroxyacyl]-alpha-D-glucosamine + holo-[ACP] + H(+). It participates in bacterial outer membrane biogenesis; LPS lipid A biosynthesis. Functionally, catalyzes the N-acylation of UDP-3-O-acylglucosamine using 3-hydroxyacyl-ACP as the acyl donor. Is involved in the biosynthesis of lipid A, a phosphorylated glycolipid that anchors the lipopolysaccharide to the outer membrane of the cell. This chain is UDP-3-O-acylglucosamine N-acyltransferase, found in Pseudomonas paraeruginosa (strain DSM 24068 / PA7) (Pseudomonas aeruginosa (strain PA7)).